A 146-amino-acid chain; its full sequence is Snaclec mucetin subunit beta (146 aa).

Residues 1 to 23 form the signal peptide; that stretch reads MGRFIFVSFGLLVVFISLSGTEA. Cystine bridges form between Cys-27/Cys-38, Cys-55/Cys-144, and Cys-121/Cys-136. In terms of domain architecture, C-type lectin spans 34–145; sequence YDEHCYQVFQ…CSSKRYVVCK (112 aa).

It belongs to the snaclec family. As to quaternary structure, dimer and tetramer of heterodimers of alpha and beta subunits ((alphabeta)(2) and (alphabeta)(4)); disulfide-linked. These two multimeric forms are found. The complex is glycosylated. Expressed by the venom gland.

The protein resides in the secreted. Functionally, potent platelet activator that acts via GPIb (GP1BA/GP1BB). After activation by the toxin, the receptor is redistributed on platelet surface thanks to cytoskeletal translocation. The indirect activation of integrin alpha-IIb/beta-3 (ITGA2B/ITGB3) also induced by the toxin is downstream the cytoskeletal translocation of GPIb. This Protobothrops mucrosquamatus (Taiwan habu) protein is Snaclec mucetin subunit beta.